Consider the following 193-residue polypeptide: Proteasome subunit beta 1 (193 aa).

The propeptide at 1–4 (MPGA) is removed in mature form; by autocatalysis. Residue T5 is the Nucleophile of the active site.

It belongs to the peptidase T1B family. The 20S proteasome core is composed of 14 alpha and 14 beta subunits that assemble into four stacked heptameric rings, resulting in a barrel-shaped structure. The two inner rings, each composed of seven catalytic beta subunits, are sandwiched by two outer rings, each composed of seven alpha subunits. The catalytic chamber with the active sites is on the inside of the barrel. Has a gated structure, the ends of the cylinder being occluded by the N-termini of the alpha-subunits. Is capped at one or both ends by the proteasome regulatory ATPase, PAN.

The protein localises to the cytoplasm. It carries out the reaction Cleavage of peptide bonds with very broad specificity.. With respect to regulation, the formation of the proteasomal ATPase PAN-20S proteasome complex, via the docking of the C-termini of PAN into the intersubunit pockets in the alpha-rings, triggers opening of the gate for substrate entry. Interconversion between the open-gate and close-gate conformations leads to a dynamic regulation of the 20S proteasome proteolysis activity. Component of the proteasome core, a large protease complex with broad specificity involved in protein degradation. The chain is Proteasome subunit beta 1 from Cenarchaeum symbiosum (strain A).